Consider the following 554-residue polypeptide: Dihydroxy-acid dehydratase (554 aa).

Mg(2+) is bound at residue aspartate 78. Cysteine 119 provides a ligand contact to [2Fe-2S] cluster. Residues aspartate 120 and lysine 121 each contribute to the Mg(2+) site. Position 121 is an N6-carboxylysine (lysine 121). Cysteine 191 is a [2Fe-2S] cluster binding site. Glutamate 444 lines the Mg(2+) pocket. The Proton acceptor role is filled by serine 470.

This sequence belongs to the IlvD/Edd family. Homodimer. [2Fe-2S] cluster is required as a cofactor. It depends on Mg(2+) as a cofactor.

It catalyses the reaction (2R)-2,3-dihydroxy-3-methylbutanoate = 3-methyl-2-oxobutanoate + H2O. The enzyme catalyses (2R,3R)-2,3-dihydroxy-3-methylpentanoate = (S)-3-methyl-2-oxopentanoate + H2O. Its pathway is amino-acid biosynthesis; L-isoleucine biosynthesis; L-isoleucine from 2-oxobutanoate: step 3/4. The protein operates within amino-acid biosynthesis; L-valine biosynthesis; L-valine from pyruvate: step 3/4. Functionally, functions in the biosynthesis of branched-chain amino acids. Catalyzes the dehydration of (2R,3R)-2,3-dihydroxy-3-methylpentanoate (2,3-dihydroxy-3-methylvalerate) into 2-oxo-3-methylpentanoate (2-oxo-3-methylvalerate) and of (2R)-2,3-dihydroxy-3-methylbutanoate (2,3-dihydroxyisovalerate) into 2-oxo-3-methylbutanoate (2-oxoisovalerate), the penultimate precursor to L-isoleucine and L-valine, respectively. The polypeptide is Dihydroxy-acid dehydratase (Nitratidesulfovibrio vulgaris (strain DP4) (Desulfovibrio vulgaris)).